Here is a 263-residue protein sequence, read N- to C-terminus: Lens fiber major intrinsic protein (263 aa).

The Cytoplasmic segment spans residues 1 to 9 (MWELRSASF). The chain crosses the membrane as a helical span at residues 10 to 29 (WRAICAEFFASLFYVFFGLG). At 30-41 (ASLRWAPGPLHV) the chain is on the extracellular side. A helical membrane pass occupies residues 42–59 (LQVALAFGLALATLVQAV). At 60–61 (GH) the chain is on the cytoplasmic side. The segment at residues 62–77 (ISGAHVNPAVTFAFLV) is an intramembrane region (discontinuously helical). The NPA 1 signature appears at 68–70 (NPA). Residues 78-82 (GSQMS) are Cytoplasmic-facing. The chain crosses the membrane as a helical span at residues 83 to 106 (LLRAICYMVAQLLGAVAGAAVLYS). Residues 107–127 (VTPPAVRGNLALNTLHPGVSV) are Extracellular-facing. A helical transmembrane segment spans residues 128 to 148 (GQATIVEIFLTLQFVLCIFAT). The Cytoplasmic portion of the chain corresponds to 149 to 156 (YDERRNGR). Residues 157–175 (LGSVALAVGFSLTLGHLFG) traverse the membrane as a helical segment. The Extracellular portion of the chain corresponds to 176–178 (MYY). The discontinuously helical intramembrane region spans 179–193 (TGAGMNPARSFAPAI). Positions 184–186 (NPA) match the NPA 2 motif. Topologically, residues 194 to 200 (LTRNFTN) are extracellular. Residues 201–222 (HWVYWVGPVIGAGLGSLLYDFL) traverse the membrane as a helical segment. Over 223–263 (LFPRLKSVSERLSILKGSRPSESNGQPEVTGEPVELKTQAL) the chain is Cytoplasmic. Positions 227–237 (LKSVSERLSIL) are interaction with CALM. Position 235 is a phosphoserine (Ser-235). The interval 239–263 (GSRPSESNGQPEVTGEPVELKTQAL) is disordered. Ser-243 is modified (phosphoserine; by PKA). Ser-245 is modified (phosphoserine). The residue at position 246 (Asn-246) is a Deamidated asparagine.

Belongs to the MIP/aquaporin (TC 1.A.8) family. Homotetramer; each monomer provides an independent water pore. Two homotetramers on opposing membranes can dimerize, forming a cell-cell junction. Interacts with CALM; the calcium-calmodulin/CALM complex interacts with the cytoplasmic domains of two aquaporins, leading to channel closure. Interacts with BFSP1 (via C-terminus); prevents calcium-dependent inhibition of the water channel activity. Post-translationally, fatty acylated at Met-1 and Lys-238. The acyl modifications, in decreasing order of ion abundance, are: oleoyl (C18:1) &gt; palmitoyl (C16:0) &gt; stearoyl (C18:0) &gt; eicosenoyl (C20:1) &gt; dihomo-gamma-linolenoyl (C20:3) &gt; palmitoleoyl (C16:1) &gt; eicosadienoyl (C20:2). Subject to partial proteolytic cleavage in the eye lens core. Partial proteolysis promotes interactions between tetramers from adjoining membranes. As to expression, major component of lens fiber junctions.

It is found in the cell membrane. It localises to the cell junction. It catalyses the reaction H2O(in) = H2O(out). Its activity is regulated as follows. The water channel activity is inhibited by calcium through calmodulin/CALM. In terms of biological role, aquaporins form homotetrameric transmembrane channels, with each monomer independently mediating water transport across the plasma membrane along its osmotic gradient. Specifically expressed in lens fiber cells, this aquaporin is crucial for maintaining lens water homeostasis and transparency. Beyond water permeability, it also acts as a cell-to-cell adhesion molecule, forming thin junctions between lens fiber cells that are essential for maintaining the ordered structure and transparency of the lens. This is Lens fiber major intrinsic protein from Bos taurus (Bovine).